A 717-amino-acid chain; its full sequence is Mitotic spindle assembly checkpoint protein MAD1 (717 aa).

Met1 carries the N-acetylmethionine modification. Residue Ser16 is modified to Phosphoserine. Residues 46–631 (EQSMQLEERA…QTKIQEFRKV (586 aa)) adopt a coiled-coil conformation. Lys61 bears the N6-acetyllysine; alternate mark. Lys61 is covalently cross-linked (Glycyl lysine isopeptide (Lys-Gly) (interchain with G-Cter in SUMO2); alternate). Positions 79–82 (KRAR) match the Nuclear localization signal motif. Phosphoserine occurs at positions 214 and 428. The tract at residues 380 to 532 (LLEERKKREI…EMQMERLTLQ (153 aa)) is necessary for interaction with NEK2. The tract at residues 540–551 (TKVLHMSLNPAS) is necessary for interaction with MAD2L1.

It belongs to the MAD1 family. Homodimer. Dimerizes via its N- and C- terminal regions. Heterodimerizes with MAD2L1 in order to form a tetrameric MAD1L1-MAD2L1 core complex. Interacts with the closed conformation form of MAD2L1 (C-MAD2) and open conformation form of MAD2L1 (O-MAD2). It is unclear whether MAD1L1 dimerization promotes the conversion of closed to open conformation of MAD2L1. Formation of a heterotetrameric core complex containing two molecules each of MAD1L1 and of MAD2L1 promotes binding of another molecule of MAD2L1 to each MAD2L1, resulting in a heterohexamer. Perturbation of the original MAD1L1-MAD2L1 structure by the spindle checkpoint may decrease MAD2L1 affinity for MAD1L1. CDC20 can compete with MAD1L1 for MAD2L1 binding, until the attachment and/or tension dampen the checkpoint signal, preventing further release of MAD2L1 on to CDC20. Also able to interact with the BUB1/BUB3 complex. Interacts with NEK2. Interacts with TTK. Interacts with TPR; the interactions occurs in a microtubule-independent manner. Interacts with IK. Interacts with the viral Tax protein. Interacts with PRAP1. In terms of processing, phosphorylated; by BUB1. Become hyperphosphorylated in late S through M phases or after mitotic spindle damage.

The protein localises to the nucleus. Its subcellular location is the chromosome. It is found in the centromere. It localises to the kinetochore. The protein resides in the nucleus envelope. The protein localises to the cytoplasm. Its subcellular location is the cytoskeleton. It is found in the microtubule organizing center. It localises to the centrosome. The protein resides in the spindle. The protein localises to the spindle pole. Its function is as follows. Component of the spindle-assembly checkpoint that prevents the onset of anaphase until all chromosomes are properly aligned at the metaphase plate. Forms a heterotetrameric complex with the closed conformation form of MAD2L1 (C-MAD2) at unattached kinetochores during prometaphase, recruits an open conformation of MAD2L1 (O-MAD2) and promotes the conversion of O-MAD2 to C-MAD2, which ensures mitotic checkpoint signaling. This Cricetulus griseus (Chinese hamster) protein is Mitotic spindle assembly checkpoint protein MAD1 (MAD1L1).